Reading from the N-terminus, the 341-residue chain is Nicotinate-nucleotide--dimethylbenzimidazole phosphoribosyltransferase (341 aa).

Glu310 serves as the catalytic Proton acceptor.

The protein belongs to the CobT family.

It carries out the reaction 5,6-dimethylbenzimidazole + nicotinate beta-D-ribonucleotide = alpha-ribazole 5'-phosphate + nicotinate + H(+). Its pathway is nucleoside biosynthesis; alpha-ribazole biosynthesis; alpha-ribazole from 5,6-dimethylbenzimidazole: step 1/2. Catalyzes the synthesis of alpha-ribazole-5'-phosphate from nicotinate mononucleotide (NAMN) and 5,6-dimethylbenzimidazole (DMB). This is Nicotinate-nucleotide--dimethylbenzimidazole phosphoribosyltransferase from Vibrio cholerae serotype O1 (strain ATCC 39315 / El Tor Inaba N16961).